Reading from the N-terminus, the 388-residue chain is Dual-specificity RNA methyltransferase RlmN (388 aa).

Glu-109 serves as the catalytic Proton acceptor. A Radical SAM core domain is found at 115-354; that stretch reads EEDRATLCVS…TIVRKTRGDD (240 aa). A disulfide bridge connects residues Cys-122 and Cys-359. Residues Cys-129, Cys-133, and Cys-136 each contribute to the [4Fe-4S] cluster site. Residues 183 to 184, Ser-215, 237 to 239, and Asn-316 each bind S-adenosyl-L-methionine; these read GE and SLH. Cys-359 (S-methylcysteine intermediate) is an active-site residue.

The protein belongs to the radical SAM superfamily. RlmN family. It depends on [4Fe-4S] cluster as a cofactor.

It is found in the cytoplasm. The enzyme catalyses adenosine(2503) in 23S rRNA + 2 reduced [2Fe-2S]-[ferredoxin] + 2 S-adenosyl-L-methionine = 2-methyladenosine(2503) in 23S rRNA + 5'-deoxyadenosine + L-methionine + 2 oxidized [2Fe-2S]-[ferredoxin] + S-adenosyl-L-homocysteine. The catalysed reaction is adenosine(37) in tRNA + 2 reduced [2Fe-2S]-[ferredoxin] + 2 S-adenosyl-L-methionine = 2-methyladenosine(37) in tRNA + 5'-deoxyadenosine + L-methionine + 2 oxidized [2Fe-2S]-[ferredoxin] + S-adenosyl-L-homocysteine. Functionally, specifically methylates position 2 of adenine 2503 in 23S rRNA and position 2 of adenine 37 in tRNAs. m2A2503 modification seems to play a crucial role in the proofreading step occurring at the peptidyl transferase center and thus would serve to optimize ribosomal fidelity. The sequence is that of Dual-specificity RNA methyltransferase RlmN from Klebsiella pneumoniae subsp. pneumoniae (strain ATCC 700721 / MGH 78578).